Consider the following 284-residue polypeptide: Sulfotransferase 2A6 (284 aa).

43–48 (KSGTNW) lines the 3'-phosphoadenylyl sulfate pocket. Histidine 98 (proton acceptor) is an active-site residue. 3'-phosphoadenylyl sulfate-binding positions include arginine 120, serine 128, tyrosine 183, 217-222 (SSFQVM), and 246-248 (RNG).

The protein belongs to the sulfotransferase 1 family. Oligomer. As to expression, liver, exhibiting a sex-dependent spatial localization in the lobule of the liver.

It is found in the cytoplasm. It localises to the cytosol. The enzyme catalyses an alcohol + 3'-phosphoadenylyl sulfate = an alkyl sulfate + adenosine 3',5'-bisphosphate + H(+). The catalysed reaction is glycolithocholate + 3'-phosphoadenylyl sulfate = sulfoglycolithocholate + adenosine 3',5'-bisphosphate + H(+). It carries out the reaction taurolithocholate + 3'-phosphoadenylyl sulfate = taurolithocholate 3-sulfate + adenosine 3',5'-bisphosphate + H(+). It catalyses the reaction 3beta-hydroxyandrost-5-en-17-one + 3'-phosphoadenylyl sulfate = dehydroepiandrosterone 3-sulfate + adenosine 3',5'-bisphosphate + H(+). The enzyme catalyses 3beta-hydroxy-5-cholenate + 3'-phosphoadenylyl sulfate = 3beta-sulfo-5-cholenate + adenosine 3',5'-bisphosphate + H(+). The catalysed reaction is deoxycholate + 3'-phosphoadenylyl sulfate = 3alpha-sulfodeoxycholate + adenosine 3',5'-bisphosphate + H(+). It carries out the reaction glycodeoxycholate + 3'-phosphoadenylyl sulfate = 3alpha-sulfoglycodeoxycholate + adenosine 3',5'-bisphosphate + H(+). It catalyses the reaction taurodeoxycholate + 3'-phosphoadenylyl sulfate = 3alpha-sulfotaurodeoxycholate + adenosine 3',5'-bisphosphate + H(+). Sulfotransferase that utilizes 3'-phospho-5'-adenylyl sulfate (PAPS) as sulfonate donor to catalyze the sulfonation of the hydroxyl group of hydroxysteroids and bile acids. Prefered substrates are dehydroepiandrosterone (DHEA, also known as 3beta-hydroxyandrost-5-en-17-one) and 3beta-hydroxy-5-cholenoate, but can also catalyze deoxycholate and its conjugates, and lithocholate conjugates, in vitro. In Rattus norvegicus (Rat), this protein is Sulfotransferase 2A6.